A 486-amino-acid polypeptide reads, in one-letter code: Protein nucleotidyltransferase YdiU (486 aa).

Positions 90, 92, 93, 113, 125, 126, 176, and 183 each coordinate ATP. The active-site Proton acceptor is the aspartate 252. Mg(2+)-binding residues include asparagine 253 and aspartate 262. Residue aspartate 262 coordinates ATP.

This sequence belongs to the SELO family. The cofactor is Mg(2+). Mn(2+) serves as cofactor.

The enzyme catalyses L-seryl-[protein] + ATP = 3-O-(5'-adenylyl)-L-seryl-[protein] + diphosphate. It carries out the reaction L-threonyl-[protein] + ATP = 3-O-(5'-adenylyl)-L-threonyl-[protein] + diphosphate. The catalysed reaction is L-tyrosyl-[protein] + ATP = O-(5'-adenylyl)-L-tyrosyl-[protein] + diphosphate. It catalyses the reaction L-histidyl-[protein] + UTP = N(tele)-(5'-uridylyl)-L-histidyl-[protein] + diphosphate. The enzyme catalyses L-seryl-[protein] + UTP = O-(5'-uridylyl)-L-seryl-[protein] + diphosphate. It carries out the reaction L-tyrosyl-[protein] + UTP = O-(5'-uridylyl)-L-tyrosyl-[protein] + diphosphate. In terms of biological role, nucleotidyltransferase involved in the post-translational modification of proteins. It can catalyze the addition of adenosine monophosphate (AMP) or uridine monophosphate (UMP) to a protein, resulting in modifications known as AMPylation and UMPylation. The protein is Protein nucleotidyltransferase YdiU of Pseudomonas putida (strain GB-1).